Reading from the N-terminus, the 163-residue chain is MMNIVLARIDDRFIHGQILTRWIKVHAADRIIVVSDDIAQDEMRKTLILSVAPSNVKASAVSVSKMAKAFHSPRYEGVTAMLLFENPSDIVSLIEAGVPIKTVNVGGMRFENHRRQITKSVSVTEQDIKAFETLSDKGVKLELRQLPSDASEDFVQILRNVTK.

The 163-residue stretch at 1-163 (MMNIVLARID…FVQILRNVTK (163 aa)) folds into the PTS EIIB type-4 domain. Residue histidine 15 is the Pros-phosphohistidine intermediate of the active site. Histidine 15 carries the post-translational modification Phosphohistidine; by EIIA.

The protein localises to the cytoplasm. The enzyme catalyses D-fructose(out) + N(pros)-phospho-L-histidyl-[protein] = D-fructose 1-phosphate(in) + L-histidyl-[protein]. Functionally, the phosphoenolpyruvate-dependent sugar phosphotransferase system (sugar PTS), a major carbohydrate active -transport system, catalyzes the phosphorylation of incoming sugar substrates concomitantly with their translocation across the cell membrane. The enzyme II LevDE PTS system is involved in fructose transport. In terms of biological role, levD and LevE act as negative regulators of the levanase operon. They may be involved in a PTS-mediated phosphorylation of a regulator. The polypeptide is PTS system fructose-specific EIIB component (Bacillus subtilis (strain 168)).